Here is a 244-residue protein sequence, read N- to C-terminus: tRNA (guanine-N(1)-)-methyltransferase (244 aa).

S-adenosyl-L-methionine contacts are provided by residues G113 and 133 to 138 (IGDFVL).

It belongs to the RNA methyltransferase TrmD family. In terms of assembly, homodimer.

The protein resides in the cytoplasm. The enzyme catalyses guanosine(37) in tRNA + S-adenosyl-L-methionine = N(1)-methylguanosine(37) in tRNA + S-adenosyl-L-homocysteine + H(+). In terms of biological role, specifically methylates guanosine-37 in various tRNAs. This Bacillus pumilus (strain SAFR-032) protein is tRNA (guanine-N(1)-)-methyltransferase.